The chain runs to 316 residues: HPr kinase/phosphorylase (316 aa).

Active-site residues include His-143 and Lys-164. Residue 158–165 (GEAGSGKS) coordinates ATP. Ser-165 serves as a coordination point for Mg(2+). Catalysis depends on Asp-182, which acts as the Proton acceptor; for phosphorylation activity. Proton donor; for dephosphorylation activity. The interval 206–215 (LEVRGLGVLN) is important for the catalytic mechanism of both phosphorylation and dephosphorylation. Residue Glu-207 participates in Mg(2+) binding. Arg-251 is a catalytic residue. Residues 272–277 (PVMPGR) form an important for the catalytic mechanism of dephosphorylation region.

The protein belongs to the HPrK/P family. In terms of assembly, homohexamer. Mg(2+) is required as a cofactor.

The catalysed reaction is [HPr protein]-L-serine + ATP = [HPr protein]-O-phospho-L-serine + ADP + H(+). The enzyme catalyses [HPr protein]-O-phospho-L-serine + phosphate + H(+) = [HPr protein]-L-serine + diphosphate. In terms of biological role, catalyzes the ATP- as well as the pyrophosphate-dependent phosphorylation of a specific serine residue in HPr, a phosphocarrier protein of the phosphoenolpyruvate-dependent sugar phosphotransferase system (PTS). HprK/P also catalyzes the pyrophosphate-producing, inorganic phosphate-dependent dephosphorylation (phosphorolysis) of seryl-phosphorylated HPr (P-Ser-HPr). The sequence is that of HPr kinase/phosphorylase from Xylella fastidiosa (strain 9a5c).